A 372-amino-acid chain; its full sequence is Queuine tRNA-ribosyltransferase (372 aa).

The Proton acceptor role is filled by Asp-92. Substrate is bound by residues 92–96 (DSGGY), Asp-146, Gln-188, and Gly-215. Residues 246-252 (GIGSLKE) form an RNA binding region. Catalysis depends on Asp-265, which acts as the Nucleophile. The segment at 270 to 274 (TRLGR) is RNA binding; important for wobble base 34 recognition. 4 residues coordinate Zn(2+): Cys-303, Cys-305, Cys-308, and His-334.

Belongs to the queuine tRNA-ribosyltransferase family. As to quaternary structure, homodimer. Within each dimer, one monomer is responsible for RNA recognition and catalysis, while the other monomer binds to the replacement base PreQ1. Zn(2+) serves as cofactor.

The enzyme catalyses 7-aminomethyl-7-carbaguanine + guanosine(34) in tRNA = 7-aminomethyl-7-carbaguanosine(34) in tRNA + guanine. Its pathway is tRNA modification; tRNA-queuosine biosynthesis. Catalyzes the base-exchange of a guanine (G) residue with the queuine precursor 7-aminomethyl-7-deazaguanine (PreQ1) at position 34 (anticodon wobble position) in tRNAs with GU(N) anticodons (tRNA-Asp, -Asn, -His and -Tyr). Catalysis occurs through a double-displacement mechanism. The nucleophile active site attacks the C1' of nucleotide 34 to detach the guanine base from the RNA, forming a covalent enzyme-RNA intermediate. The proton acceptor active site deprotonates the incoming PreQ1, allowing a nucleophilic attack on the C1' of the ribose to form the product. After dissociation, two additional enzymatic reactions on the tRNA convert PreQ1 to queuine (Q), resulting in the hypermodified nucleoside queuosine (7-(((4,5-cis-dihydroxy-2-cyclopenten-1-yl)amino)methyl)-7-deazaguanosine). The chain is Queuine tRNA-ribosyltransferase from Prochlorococcus marinus (strain AS9601).